A 471-amino-acid polypeptide reads, in one-letter code: Heat shock 70 kDa protein 13 (471 aa).

Positions 1 to 22 (MAGEMTILGSAVLTLLLAGYLA) are cleaved as a signal peptide. Asparagine 184 is a glycosylation site (N-linked (GlcNAc...) asparagine). A disordered region spans residues 316–339 (NDSQKPQNADSKLPEDQLTPGDGH).

Belongs to the heat shock protein 70 family. In terms of assembly, binds UBQLN2.

It localises to the microsome. The protein resides in the endoplasmic reticulum. Functionally, has peptide-independent ATPase activity. In Rattus norvegicus (Rat), this protein is Heat shock 70 kDa protein 13 (Hspa13).